The chain runs to 560 residues: N-acetylglucosamine-6-sulfatase (560 aa).

Residues 1–25 form a disordered region; sequence MRLLSLAPDRPRRGGPRHLTSGSPA. The signal sequence occupies residues 1-48; sequence MRLLSLAPDRPRRGGPRHLTSGSPALPPPPPLLLLLLLLGGCLGVSGA. Positions 63, 64, and 99 each coordinate Ca(2+). Residue Cys99 is the Nucleophile of the active site. Residue Cys99 is modified to 3-oxoalanine (Cys). N-linked (GlcNAc...) asparagine glycosylation is found at Asn119, Asn125, Asn191, Asn206, Asn218, Asn287, and Asn325. 2 residues coordinate Ca(2+): Asp334 and Asn335. N-linked (GlcNAc...) asparagine glycans are attached at residues Asn370, Asn395, Asn413, Asn430, Asn457, and Asn488. Ser549 carries the post-translational modification Phosphoserine.

The protein belongs to the sulfatase family. The cofactor is Ca(2+). Post-translationally, the conversion to 3-oxoalanine (also known as C-formylglycine, FGly), of a serine or cysteine residue in prokaryotes and of a cysteine residue in eukaryotes, is critical for catalytic activity.

Its subcellular location is the lysosome. The catalysed reaction is Hydrolysis of the 6-sulfate groups of the N-acetyl-D-glucosamine 6-sulfate units of heparan sulfate and keratan sulfate.. Its function is as follows. Hydrolyzes 6-sulfate groups in N-acetyl-d-glucosaminide units of heparin sulfate and keratan sulfate. This is N-acetylglucosamine-6-sulfatase (GNS) from Bos taurus (Bovine).